The primary structure comprises 305 residues: tRNA dimethylallyltransferase (305 aa).

14-21 (GPTASGKS) contributes to the ATP binding site. Substrate is bound at residue 16–21 (TASGKS). The interaction with substrate tRNA stretch occupies residues 39–42 (DSMQ).

It belongs to the IPP transferase family. In terms of assembly, monomer. The cofactor is Mg(2+).

It catalyses the reaction adenosine(37) in tRNA + dimethylallyl diphosphate = N(6)-dimethylallyladenosine(37) in tRNA + diphosphate. In terms of biological role, catalyzes the transfer of a dimethylallyl group onto the adenine at position 37 in tRNAs that read codons beginning with uridine, leading to the formation of N6-(dimethylallyl)adenosine (i(6)A). This chain is tRNA dimethylallyltransferase, found in Bradyrhizobium sp. (strain BTAi1 / ATCC BAA-1182).